Reading from the N-terminus, the 432-residue chain is Adenylosuccinate synthetase (432 aa).

Residues 12–18 (GDEGKGK) and 40–42 (GHT) each bind GTP. The active-site Proton acceptor is the Asp13. Residues Asp13 and Gly40 each coordinate Mg(2+). Residues 13-16 (DEGK), 38-41 (NAGH), Thr128, Arg142, Gln223, Thr238, and Arg302 each bind IMP. His41 functions as the Proton donor in the catalytic mechanism. Position 298 to 304 (298 to 304 (TVTGRPR)) interacts with substrate. Residues Arg304, 330–332 (LLD), and 412–414 (SVG) contribute to the GTP site.

Belongs to the adenylosuccinate synthetase family. In terms of assembly, homodimer. Mg(2+) serves as cofactor.

The protein localises to the cytoplasm. The catalysed reaction is IMP + L-aspartate + GTP = N(6)-(1,2-dicarboxyethyl)-AMP + GDP + phosphate + 2 H(+). The protein operates within purine metabolism; AMP biosynthesis via de novo pathway; AMP from IMP: step 1/2. Plays an important role in the de novo pathway of purine nucleotide biosynthesis. Catalyzes the first committed step in the biosynthesis of AMP from IMP. The polypeptide is Adenylosuccinate synthetase (Limosilactobacillus reuteri (strain DSM 20016) (Lactobacillus reuteri)).